Reading from the N-terminus, the 255-residue chain is MRLRHLSDPDSLPALDKSFAIERPALGLAPDAPPVRILLLYGSLRARSFSRLAVEEAARLLQFFGAETRIFDPSDLPLPDQVQSDDHPAVKELRALSEWSEGQVWCSPERHGQITSVMKAQIDHLPLEMAGIRPTQGRTLAVMQVSGGSQSFNAVNTLRLLGRWMRMFTIPNQSSIAKAFQEFDAAGRMKPSPYYDRIADVMEELVRFTALVRPHREALTDRYSERKAAGHVIDEATDLSSIAIAPQPLPESETS.

43 to 50 (SLRARSFS) is a binding site for FMN.

The protein belongs to the ArsH family. In terms of assembly, homotetramer. It depends on FMN as a cofactor.

In terms of biological role, has NADPH-dependent FMN reductase activity and very low azoreductase activity. No activity with NADH. The sequence is that of NADPH-dependent FMN reductase ArsH from Shigella flexneri.